Consider the following 336-residue polypeptide: Ornithine carbamoyltransferase, catabolic (336 aa).

Residues 57 to 60, Q84, R108, and 135 to 138 each bind carbamoyl phosphate; these read STRT and HPTQ. L-ornithine contacts are provided by residues N168, D232, and 236-237; that span reads SM. Residues 274-275 and R321 contribute to the carbamoyl phosphate site; that span reads CL.

It belongs to the aspartate/ornithine carbamoyltransferase superfamily. OTCase family.

Its subcellular location is the cytoplasm. It carries out the reaction carbamoyl phosphate + L-ornithine = L-citrulline + phosphate + H(+). Its pathway is amino-acid degradation; L-arginine degradation via ADI pathway; carbamoyl phosphate from L-arginine: step 2/2. In terms of biological role, reversibly catalyzes the transfer of the carbamoyl group from carbamoyl phosphate (CP) to the N(epsilon) atom of ornithine (ORN) to produce L-citrulline. In Pseudomonas putida (strain ATCC 47054 / DSM 6125 / CFBP 8728 / NCIMB 11950 / KT2440), this protein is Ornithine carbamoyltransferase, catabolic (arcB).